The primary structure comprises 163 residues: Nucleotide-binding protein Asuc_2113 (163 aa).

It belongs to the YajQ family.

In terms of biological role, nucleotide-binding protein. This Actinobacillus succinogenes (strain ATCC 55618 / DSM 22257 / CCUG 43843 / 130Z) protein is Nucleotide-binding protein Asuc_2113.